The primary structure comprises 179 residues: Calcineurin subunit B type 2 (179 aa).

Glycine 2 carries the N-myristoyl glycine lipid modification. EF-hand domains lie at 18–53 (EEIRRLGKSFRKLDLDKSGSLSIEEFMRLPELQQNP), 57–85 (RVIDIFDTDGNGEVDFHEFIVGTSQFSVK), 87–122 (DEEQKLRFAFRIYDMDNDGFISNGELFQVLKMMVGN), and 128–163 (QLQQLVDKSILVLDKDGDGRISFEEFSDVVKTMEIH). Residues aspartate 31, aspartate 33, serine 35, serine 37, glutamate 42, aspartate 63, aspartate 65, asparagine 67, glutamate 69, glutamate 74, aspartate 100, aspartate 102, aspartate 104, and glutamate 111 each coordinate Ca(2+). Positions 131 to 136 (QLVDKS) are calcineurin A binding. 5 residues coordinate Ca(2+): aspartate 141, aspartate 143, aspartate 145, arginine 147, and glutamate 152.

This sequence belongs to the calcineurin regulatory subunit family. In terms of assembly, forms a complex composed of a calmodulin-dependent catalytic subunit (also known as calcineurin A) and a regulatory Ca(2+)-binding subunit (also known as calcineurin B). There are three catalytic subunits, each encoded by a separate gene (PPP3CA, PPP3CB, and PPP3CC) and two regulatory subunits which are also encoded by separate genes (PPP3R1 and PPP3R2). Interacts with SPATA33 (via PQIIIT motif). In terms of tissue distribution, expressed in osteoblasts and bone marrow (at protein level). Expressed in the testis. Expressed in the sperm midpiece in a SPATA33-dependent manner (at protein level).

The protein localises to the mitochondrion. Regulatory subunit of calcineurin, a calcium-dependent, calmodulin stimulated protein phosphatase. Confers calcium sensitivity. The protein is Calcineurin subunit B type 2 (Ppp3r2) of Mus musculus (Mouse).